A 451-amino-acid polypeptide reads, in one-letter code: Tubulin alpha-2 chain (451 aa).

GTP contacts are provided by Gln-12, Asp-73, Ser-142, Gly-146, Thr-147, Thr-181, Asn-208, and Asn-230. Asp-73 is a binding site for Mg(2+). Residue Glu-256 is part of the active site.

Belongs to the tubulin family. In terms of assembly, dimer of alpha and beta chains. A typical microtubule is a hollow water-filled tube with an outer diameter of 25 nm and an inner diameter of 15 nM. Alpha-beta heterodimers associate head-to-tail to form protofilaments running lengthwise along the microtubule wall with the beta-tubulin subunit facing the microtubule plus end conferring a structural polarity. Microtubules usually have 13 protofilaments but different protofilament numbers can be found in some organisms and specialized cells. The cofactor is Mg(2+).

The protein localises to the cytoplasm. It localises to the cytoskeleton. It carries out the reaction GTP + H2O = GDP + phosphate + H(+). Functionally, tubulin is the major constituent of microtubules, a cylinder consisting of laterally associated linear protofilaments composed of alpha- and beta-tubulin heterodimers. Microtubules grow by the addition of GTP-tubulin dimers to the microtubule end, where a stabilizing cap forms. Below the cap, tubulin dimers are in GDP-bound state, owing to GTPase activity of alpha-tubulin. The chain is Tubulin alpha-2 chain (tubB) from Emericella nidulans (strain FGSC A4 / ATCC 38163 / CBS 112.46 / NRRL 194 / M139) (Aspergillus nidulans).